Reading from the N-terminus, the 448-residue chain is Leukocyte immunoglobulin-like receptor subfamily B member 4 (448 aa).

A signal peptide spans 1-21 (MIPTFTALLCLGLSLGPRTHM). The Extracellular segment spans residues 22-259 (QAGPLPKPTL…PHSGLRRHWE (238 aa)). Ig-like C2-type domains lie at 27–118 (PKPT…LVMT) and 124–218 (PTLS…LIVS). Cystine bridges form between cysteine 49-cysteine 98 and cysteine 144-cysteine 195. A disordered region spans residues 217–248 (VSGSLEDPRPSPTRSVSTAAGPEDQPLMPTGS). The chain crosses the membrane as a helical span at residues 260–280 (VLIGVLVVSILLLSLLLFLLL). Residues 281–448 (QHWRQGKHRT…PSVYATLAIH (168 aa)) are Cytoplasmic-facing. The interval 297–448 (DFQRPPGAAE…PSVYATLAIH (152 aa)) is disordered. Residue serine 319 is modified to Phosphoserine. Residues 344 to 354 (MDTRQSPHDED) are compositionally biased toward basic and acidic residues. Residues 358-363 (VTYAKV) carry the ITIM motif 1 motif. A compositionally biased stretch (basic and acidic residues) spans 384-398 (LDTKDRQAEEDRQMD). 2 short sequence motifs (ITIM motif) span residues 410 to 415 (VTYAQL) and 440 to 445 (SVYATL).

In terms of assembly, interacts with PTPN6. In terms of tissue distribution, detected on monocytes, macrophages, dendritic cells, natural killer cells and B-cells (at protein level). Expressed in the lung.

Its subcellular location is the cell membrane. Its function is as follows. Inhibitory receptor involved in the down-regulation of the immune response and the development of immune tolerance. Receptor for FN1. Receptor for apolipoprotein APOE. Receptor for ALCAM/CD166. Inhibits receptor-mediated phosphorylation of cellular proteins and mobilization of intracellular calcium ions. Inhibits FCGR1A/CD64-mediated monocyte activation by inducing phosphatase-mediated down-regulation of the phosphorylation of multiple proteins including LCK, SYK, LAT and ERK, leading to a reduction in TNF production. This inhibition of monocyte activation occurs at least in part via binding to FN1. Inhibits T cell proliferation, inducing anergy, suppressing the differentiation of IFNG-producing CD8+ cytotoxic T cells and enhancing the generation of CD8+ T suppressor cells. Induces up-regulation of CD86 on dendritic cells. Interferes with TNFRSF5-signaling and NF-kappa-B up-regulation. The protein is Leukocyte immunoglobulin-like receptor subfamily B member 4 (LILRB4) of Homo sapiens (Human).